The primary structure comprises 289 residues: ATP synthase gamma chain (289 aa).

This sequence belongs to the ATPase gamma chain family. F-type ATPases have 2 components, CF(1) - the catalytic core - and CF(0) - the membrane proton channel. CF(1) has five subunits: alpha(3), beta(3), gamma(1), delta(1), epsilon(1). CF(0) has three main subunits: a, b and c.

It localises to the cell membrane. Produces ATP from ADP in the presence of a proton gradient across the membrane. The gamma chain is believed to be important in regulating ATPase activity and the flow of protons through the CF(0) complex. The chain is ATP synthase gamma chain from Lactococcus lactis subsp. lactis (strain IL1403) (Streptococcus lactis).